Reading from the N-terminus, the 81-residue chain is Small ribosomal subunit protein uS17 (81 aa).

Belongs to the universal ribosomal protein uS17 family. In terms of assembly, part of the 30S ribosomal subunit.

Functionally, one of the primary rRNA binding proteins, it binds specifically to the 5'-end of 16S ribosomal RNA. This is Small ribosomal subunit protein uS17 from Trichormus variabilis (strain ATCC 29413 / PCC 7937) (Anabaena variabilis).